The following is a 194-amino-acid chain: GTP cyclohydrolase 1 (194 aa).

Positions 83, 86, and 155 each coordinate Zn(2+).

It belongs to the GTP cyclohydrolase I family. Toroid-shaped homodecamer, composed of two pentamers of five dimers.

It carries out the reaction GTP + H2O = 7,8-dihydroneopterin 3'-triphosphate + formate + H(+). Its pathway is cofactor biosynthesis; 7,8-dihydroneopterin triphosphate biosynthesis; 7,8-dihydroneopterin triphosphate from GTP: step 1/1. The sequence is that of GTP cyclohydrolase 1 from Streptococcus pyogenes serotype M3 (strain ATCC BAA-595 / MGAS315).